The sequence spans 624 residues: DNA mismatch repair protein MutL (624 aa).

The segment at 416-436 (LTPSVDQPDTGDGENPVAPEK) is disordered.

This sequence belongs to the DNA mismatch repair MutL/HexB family.

In terms of biological role, this protein is involved in the repair of mismatches in DNA. It is required for dam-dependent methyl-directed DNA mismatch repair. May act as a 'molecular matchmaker', a protein that promotes the formation of a stable complex between two or more DNA-binding proteins in an ATP-dependent manner without itself being part of a final effector complex. The chain is DNA mismatch repair protein MutL from Chlorobaculum tepidum (strain ATCC 49652 / DSM 12025 / NBRC 103806 / TLS) (Chlorobium tepidum).